The chain runs to 1196 residues: Probable cation-transporting ATPase 13A4 (1196 aa).

At 1-31 (MGHFEKGQHALLNEGEENEMEIFGYRTQGCR) the chain is on the cytoplasmic side. The stretch at 32–52 (KSLCLAGSIFSFGILPLVFYW) is an intramembrane region. Residues 53–197 (RPAWHVWAHC…DVEVTPIWKL (145 aa)) lie on the Cytoplasmic side of the membrane. The chain crosses the membrane as a helical span at residues 198–218 (LIKEVLNPFYIFQLFSVCLWF). Topologically, residues 219 to 223 (SEDYK) are lumenal. A helical transmembrane segment spans residues 224–244 (EYAFAIIIMSIISISLTVYDL). The Cytoplasmic portion of the chain corresponds to 245-400 (REQSVKLHHL…NFQLYRDAIR (156 aa)). A helical transmembrane segment spans residues 401 to 421 (FLLCLVGTATIGMIYTLCVYV). At 422-436 (LSGEPPEEVVRKALD) the chain is on the lumenal side. The helical transmembrane segment at 437–457 (VITIAVPPALPAALTTGIIYA) threads the bilayer. Residues 458-900 (QRRLKKRGIF…KEGRAALVTS (443 aa)) lie on the Cytoplasmic side of the membrane. Catalysis depends on Asp486, which acts as the 4-aspartylphosphate intermediate. Mg(2+) is bound by residues Asp848 and Asp852. Residues 901–921 (FCMFKYMALYSMIQYVGVLLL) form a helical membrane-spanning segment. At 922–932 (YWETNSLSNYQ) the chain is on the lumenal side. Residues 933-953 (FLFQDLAITTLIGVTMNLNGA) form a helical membrane-spanning segment. Topologically, residues 954-972 (YPKLVPFRPAGRLISPPLL) are cytoplasmic. The helical transmembrane segment at 973 to 993 (LSVIFNILLSLAMHIAGFILV) threads the bilayer. At 994–1035 (QRQPWYSVEIHSACTVQNESISELTMSPTAPEKMESNSTFTS) the chain is on the lumenal side. Residues 1036–1056 (FENTTVWFLGTINCITVALVF) form a helical membrane-spanning segment. Residues 1057 to 1070 (SKGKPFRQPTYTNY) lie on the Cytoplasmic side of the membrane. A helical membrane pass occupies residues 1071–1091 (IFVLVLIIQLGVCLFILFADI). Over 1092–1109 (PELYRRLDLLCTPVLWRA) the chain is Lumenal. The helical transmembrane segment at 1110-1130 (SIVIMLSLNFIVSLVAEEAVI) threads the bilayer. At 1131-1196 (ENRALWMMIK…PVFESNEEQL (66 aa)) the chain is on the cytoplasmic side.

The protein belongs to the cation transport ATPase (P-type) (TC 3.A.3) family. Type V subfamily. Expressed in heart, placenta, liver, skeletal muscles, and pancreas. Lower levels of expression are also detected in brain, lung and kidney. Weakly expressed in the adult brain. Expression in fetal brain is higher than in adult brain, with levels similar to several other fetal tissues including spleen and skeletal muscle. In adult brain expressed at low levels in all tissues examined, including the temporal lobe and putamen. Highly expressed in the respiratory and integumentary systems.

Its subcellular location is the early endosome membrane. The protein localises to the late endosome membrane. The protein resides in the recycling endosome membrane. It catalyses the reaction ATP + H2O = ADP + phosphate + H(+). In Homo sapiens (Human), this protein is Probable cation-transporting ATPase 13A4 (ATP13A4).